An 84-amino-acid polypeptide reads, in one-letter code: Esculentin-1B (84 aa).

The signal sequence occupies residues Met-1–Cys-22. The propeptide occupies Glu-23–Arg-38. Cys-78 and Cys-84 are disulfide-bonded.

This sequence belongs to the frog skin active peptide (FSAP) family. Brevinin subfamily. As to expression, expressed by the skin glands.

Its subcellular location is the secreted. In terms of biological role, shows antibacterial activity against representative Gram-negative and Gram-positive bacterial species, and hemolytic activity. The protein is Esculentin-1B of Pelophylax lessonae (Pool frog).